A 1534-amino-acid chain; its full sequence is DNA polymerase alpha catalytic subunit (1534 aa).

A compositionally biased stretch (low complexity) spans 1–12; sequence MDEGSADAGASG. 3 disordered regions span residues 1-23, 96-141, and 864-905; these read MDEGSADAGASGRRSRARGSEAV, THRT…LSAA, and FNST…GPSY. Basic residues predominate over residues 116–125; it reads RKRKQPRPQS. The span at 127–141 shows a compositional bias: low complexity; that stretch reads RPPQQSAAAASLSAA. Composition is skewed to basic and acidic residues over residues 864-882 and 889-898; these read FNSTKRKMNPDTEAARPDE and DEGHHVDQGK. Residues C1340, C1343, C1383, C1386, C1422, C1427, C1448, and C1454 each contribute to the Zn(2+) site. A CysA-type zinc finger spans residues 1340 to 1386; it reads CPSCSTTFDCPPVSSLIIGSSSGNVSNPNEGNDASINFWRRMRCPRC. Positions 1422 to 1451 match the CysB motif motif; that stretch reads CDDEGCKYSTHSVNLRVMGDSERGTICPNY.

Belongs to the DNA polymerase type-B family.

Its subcellular location is the nucleus. The catalysed reaction is DNA(n) + a 2'-deoxyribonucleoside 5'-triphosphate = DNA(n+1) + diphosphate. Its function is as follows. Polymerase alpha in a complex with DNA primase is a replicative polymerase. This is DNA polymerase alpha catalytic subunit from Oryza sativa subsp. japonica (Rice).